The chain runs to 199 residues: 7-methyl-GTP pyrophosphatase (199 aa).

The active-site Proton acceptor is aspartate 76.

Belongs to the Maf family. YceF subfamily. A divalent metal cation serves as cofactor.

It is found in the cytoplasm. It carries out the reaction N(7)-methyl-GTP + H2O = N(7)-methyl-GMP + diphosphate + H(+). Functionally, nucleoside triphosphate pyrophosphatase that hydrolyzes 7-methyl-GTP (m(7)GTP). May have a dual role in cell division arrest and in preventing the incorporation of modified nucleotides into cellular nucleic acids. The chain is 7-methyl-GTP pyrophosphatase from Hahella chejuensis (strain KCTC 2396).